The chain runs to 1107 residues: OTU domain-containing protein 4 (1107 aa).

The residue at position 1 (methionine 1) is an N-acetylmethionine. The OTU domain maps to 34-155 (LYRKLVAKDG…GNHYDIVYPI (122 aa)). A cys-loop region spans residues 39–45 (VAKDGSC). Residue aspartate 42 is part of the active site. The active-site Nucleophile is the cysteine 45. Residues 94 to 104 (LENPQEWVGQV) are variable-loop. Phosphotyrosine is present on tyrosine 120. Serine 126 and serine 128 each carry phosphoserine. Threonine 131 carries the post-translational modification Phosphothreonine. The interval 143–148 (FSNGNH) is his-loop. Residue histidine 148 is part of the active site. Phosphoserine is present on residues serine 166, serine 199, serine 202, and serine 204. Acidic residues predominate over residues 195–206 (EESNSEISDSED). Disordered stretches follow at residues 195–239 (EESN…SADL) and 322–431 (KHTP…DFDH). Residues 226-236 (GSENPKNNGNS) show a composition bias toward polar residues. A Phosphoserine modification is found at serine 340. Low complexity predominate over residues 392–403 (SSHSTGSQSQKS). Basic and acidic residues predominate over residues 419–431 (RKPDRERAEDFDH). Tyrosine 438 is modified (phosphotyrosine). At serine 442 the chain carries Phosphoserine. Position 459 is a phosphotyrosine (tyrosine 459). Residues 470–568 (PALSSSSVSQ…KPAEHIPLSN (99 aa)) form a disordered region. A compositionally biased stretch (low complexity) spans 473-486 (SSSSVSQSPSQNSN). Positions 495 to 528 (HARDRKGSMRRADAEERKDKDSLRGHTHVDKKPE) are enriched in basic and acidic residues. A phosphoserine mark is found at serine 544 and serine 895. The tract at residues 918–1107 (LSAASVSSKH…MGDGHRGQHT (190 aa)) is disordered. Basic and acidic residues predominate over residues 963–994 (NREREPGSAEPEPKRTIQSLKEKPEKVKDPKT). Phosphoserine is present on residues serine 1000, serine 1005, serine 1016, and serine 1017. Residues 1032-1041 (SKQFYNQTYG) are compositionally biased toward polar residues. Serine 1042 carries the phosphoserine modification. Composition is skewed to basic and acidic residues over residues 1060 to 1079 (VRGE…EGYQ) and 1089 to 1107 (YRGD…GQHT).

As to quaternary structure, interacts with MYD88; the interaction is direct. Interacts with ALKBH3; the interaction is direct. Interacts with USP7; the interaction is direct. Interacts with USP9X; the interaction is direct. Phosphorylation at Ser-202 and Ser-204 activates 'Lys-63'-specific deubiquitinase activity. Induced upon stimulation with IL1B.

The protein resides in the cytoplasm. The protein localises to the nucleus. The catalysed reaction is Thiol-dependent hydrolysis of ester, thioester, amide, peptide and isopeptide bonds formed by the C-terminal Gly of ubiquitin (a 76-residue protein attached to proteins as an intracellular targeting signal).. Phosphorylation on Ser-202 and Ser-204 induces 'Lys-63'-specific deubiquitinase activity. Deubiquitinase which hydrolyzes the isopeptide bond between the ubiquitin C-terminus and the lysine epsilon-amino group of the target protein. May negatively regulate inflammatory and pathogen recognition signaling in innate immune response. Upon phosphorylation at Ser-202 and Ser-204 residues, via IL-1 receptor and Toll-like receptor signaling pathway, specifically deubiquitinates 'Lys-63'-polyubiquitinated MYD88 adapter protein triggering down-regulation of NF-kappa-B-dependent transcription of inflammatory mediators. Independently of the catalytic activity, acts as a scaffold for alternative deubiquitinases to assemble specific deubiquitinase-substrate complexes. Associates with USP7 and USP9X deubiquitinases to stabilize alkylation repair enzyme ALKBH3, thereby promoting the repair of alkylated DNA lesions. The sequence is that of OTU domain-containing protein 4 from Mus musculus (Mouse).